We begin with the raw amino-acid sequence, 275 residues long: ATP synthase subunit delta (275 aa).

It belongs to the ATPase delta chain family. As to quaternary structure, F-type ATPases have 2 components, F(1) - the catalytic core - and F(0) - the membrane proton channel. F(1) has five subunits: alpha(3), beta(3), gamma(1), delta(1), epsilon(1). F(0) has three main subunits: a(1), b(2) and c(10-14). The alpha and beta chains form an alternating ring which encloses part of the gamma chain. F(1) is attached to F(0) by a central stalk formed by the gamma and epsilon chains, while a peripheral stalk is formed by the delta and b chains.

The protein resides in the cell membrane. Its function is as follows. F(1)F(0) ATP synthase produces ATP from ADP in the presence of a proton or sodium gradient. F-type ATPases consist of two structural domains, F(1) containing the extramembraneous catalytic core and F(0) containing the membrane proton channel, linked together by a central stalk and a peripheral stalk. During catalysis, ATP synthesis in the catalytic domain of F(1) is coupled via a rotary mechanism of the central stalk subunits to proton translocation. In terms of biological role, this protein is part of the stalk that links CF(0) to CF(1). It either transmits conformational changes from CF(0) to CF(1) or is implicated in proton conduction. The sequence is that of ATP synthase subunit delta from Nocardioides sp. (strain ATCC BAA-499 / JS614).